Consider the following 171-residue polypeptide: Transcription antitermination protein NusB (171 aa).

This sequence belongs to the NusB family.

In terms of biological role, involved in transcription antitermination. Required for transcription of ribosomal RNA (rRNA) genes. Binds specifically to the boxA antiterminator sequence of the ribosomal RNA (rrn) operons. This Brucella abortus (strain S19) protein is Transcription antitermination protein NusB.